Consider the following 662-residue polypeptide: Rap guanine nucleotide exchange factor-like 1 (662 aa).

The disordered stretch occupies residues 1 to 149 (MKPLEKFLKK…PPWAPLGAPE (149 aa)). The span at 20–48 (VAGGPGGGLGSCGGPGGGGGPGGGGGPAG) shows a compositional bias: gly residues. The span at 49-64 (GQRSLQRRQSVSRLLL) shows a compositional bias: low complexity. Positions 73–82 (AEPGLEPPVP) are enriched in pro residues. The span at 120–135 (LRSPSSYSSDELSPGE) shows a compositional bias: low complexity. Residues 424–660 (EPEDVANHLT…FELSYKLEAN (237 aa)) enclose the Ras-GEF domain.

Functionally, probable guanine nucleotide exchange factor (GEF). The protein is Rap guanine nucleotide exchange factor-like 1 (RAPGEFL1) of Homo sapiens (Human).